The primary structure comprises 283 residues: Nucleoid occlusion protein (283 aa).

The H-T-H motif DNA-binding region spans 148–167 (EALAQRLGKGQSTIANKLRL).

This sequence belongs to the ParB family.

It localises to the cytoplasm. It is found in the nucleoid. Effects nucleoid occlusion by binding relatively nonspecifically to DNA and preventing the assembly of the division machinery in the vicinity of the nucleoid, especially under conditions that disturb the cell cycle. It helps to coordinate cell division and chromosome segregation by preventing the formation of the Z ring through the nucleoid, which would cause chromosome breakage. The protein is Nucleoid occlusion protein (noc) of Bacillus subtilis (strain 168).